A 259-amino-acid polypeptide reads, in one-letter code: Tumor necrosis factor receptor superfamily member 10C (259 aa).

An N-terminal signal peptide occupies residues 1–25 (MARIPKTLKFVVVIVAVLLPVLAYS). TNFR-Cys repeat units follow at residues 29–66 (ARQE…TGAC), 69–109 (CTEG…DTVC), and 110–149 (QCKE…DIQC). Residues 30–45 (RQEEVPQQTVAPQQQR) are compositionally biased toward polar residues. The interval 30-56 (RQEEVPQQTVAPQQQRHSFKGEECPAG) is disordered. 7 disulfide bridges follow: Cys53-Cys66, Cys69-Cys85, Cys88-Cys101, Cys91-Cys109, Cys111-Cys125, Cys128-Cys141, and Cys131-Cys149. N-linked (GlcNAc...) (high mannose) asparagine glycosylation is present at Asn77. 2 N-linked (GlcNAc...) (high mannose) asparagine glycosylation sites follow: Asn140 and Asn156. The tract at residues 160-224 (ETPAAEETMN…TSPGTPAPAA (65 aa)) is disordered. 5 TAPE repeats span residues 162–176 (PAAE…GTPA), 177–191 (PAAE…GTPA), 192–206 (PAAE…GTPA), 207–221 (PAAE…GTPA), and 222–236 (PAAE…GTPA). Positions 185–217 (TSPGTPAPAAEETMTTSPGTPAPAAEETMTTSP) are enriched in low complexity. A lipid anchor (GPI-anchor amidated alanine) is attached at Ala236. Residues 237–259 (SSHYLSCTIVGIIVLIVLLIVFV) constitute a propeptide, removed in mature form.

Post-translationally, N-glycosylated and O-glycosylated. In terms of tissue distribution, higher expression in normal tissues than in tumor cell lines. Highly expressed in peripheral blood lymphocytes, spleen, skeletal muscle, placenta, lung and heart.

Its subcellular location is the cell membrane. Functionally, receptor for the cytotoxic ligand TRAIL. Lacks a cytoplasmic death domain and hence is not capable of inducing apoptosis. May protect cells against TRAIL mediated apoptosis by competing with TRAIL-R1 and R2 for binding to the ligand. The chain is Tumor necrosis factor receptor superfamily member 10C (TNFRSF10C) from Homo sapiens (Human).